A 155-amino-acid chain; its full sequence is Xanthine-guanine phosphoribosyltransferase (155 aa).

Residues Arg-37 to Gly-38 and Asp-91 to Thr-99 contribute to the 5-phospho-alpha-D-ribose 1-diphosphate site. Asp-92 contributes to the Mg(2+) binding site. The guanine site is built by Asp-95 and Ile-138. 2 residues coordinate xanthine: Asp-95 and Ile-138. GMP contacts are provided by residues Asp-95–Thr-99 and Trp-137–Ile-138.

This sequence belongs to the purine/pyrimidine phosphoribosyltransferase family. XGPT subfamily. As to quaternary structure, homotetramer. Mg(2+) is required as a cofactor.

The protein resides in the cell inner membrane. It catalyses the reaction GMP + diphosphate = guanine + 5-phospho-alpha-D-ribose 1-diphosphate. The enzyme catalyses XMP + diphosphate = xanthine + 5-phospho-alpha-D-ribose 1-diphosphate. The catalysed reaction is IMP + diphosphate = hypoxanthine + 5-phospho-alpha-D-ribose 1-diphosphate. It participates in purine metabolism; GMP biosynthesis via salvage pathway; GMP from guanine: step 1/1. The protein operates within purine metabolism; XMP biosynthesis via salvage pathway; XMP from xanthine: step 1/1. Functionally, acts on guanine, xanthine and to a lesser extent hypoxanthine. Purine salvage pathway enzyme that catalyzes the transfer of the ribosyl-5-phosphate group from 5-phospho-alpha-D-ribose 1-diphosphate (PRPP) to the N9 position of the 6-oxopurines guanine and xanthine to form the corresponding ribonucleotides GMP (guanosine 5'-monophosphate) and XMP (xanthosine 5'-monophosphate), with the release of PPi. To a lesser extent, also acts on hypoxanthine. The polypeptide is Xanthine-guanine phosphoribosyltransferase (Haemophilus influenzae (strain ATCC 51907 / DSM 11121 / KW20 / Rd)).